We begin with the raw amino-acid sequence, 408 residues long: MDLRSRTDDALDMELHAGFDAPEIARAVLTEKTLTGLISSISPLVNRLRDSILIFSDEGLIIHCSLETEQLYIPIPANMFDQYNWTGPRMVVLAATEGRSSLIDAFRHTKDPSTPTRLYFKFTGQPPERSIIQTMVWQRPGDCGPDDQVQCYKQVVKRELACYTMMFPNLTPDISICLKRDQFTRLQRLLKTFGFTTCFILTATDMYIQTAGGGFISFNVSLDINGSKPTPYNLIRSITNSKRILNNVVYGSGSMREFGVLLETHSGFRSAVQNLKLTRDETCYINFYLALTNSPMVGLYIQRSAPVHSFFYATFLSPKDLKEKLTSMQLFANTESVKDEPPLKKRRNLLTKRNEKNTGNKMGGKLPETTWQEGIGIREYCVAPPVDPAGTLDYSELSRESDVICTVK.

The short motif at 344–353 (KKRRNLLTKR) is the Nuclear localization signal element.

Belongs to the herpesviridae DNA polymerase processivity factor family. Interacts with the DNA polymerase catalytic subunit. Interacts with the origin-binding protein.

The protein localises to the host nucleus. Its function is as follows. Plays an essential role in viral DNA replication by acting as the polymerase accessory subunit. Associates with the viral polymerase to increase its processivity and forms high-affinity direct interactions with DNA. Facilitates the origin-binding protein loading onto DNA thus increasing its ability to assemble into a functional complex capable of unwinding duplex DNA. The polypeptide is DNA polymerase processivity factor (Varicella-zoster virus (strain Oka vaccine) (HHV-3)).